The chain runs to 539 residues: Protein lin-14 (539 aa).

Disordered stretches follow at residues 162-230 and 262-293; these read PTLP…SNHS and ETAP…PRKP. Composition is skewed to polar residues over residues 163–183 and 193–214; these read TLPN…GTDD and SVDS…NQNI. Over residues 274–284 the composition is skewed to low complexity; that stretch reads NGTTNGTAKAG. Residues 296-440 are involved in sequence-specific DNA-binding; that stretch reads DDIVKIVRNQ…CRRVRHAKKT (145 aa).

Cleaved by caspase ced-3 in vitro. High levels in hypodermal, intestinal, body wall muscle, nerve ring, and ventral nerve cord cells of embryos and L1 animals.

The protein resides in the nucleus. Its function is as follows. Heterochronic protein which controls the choice of stage specific cell fates. Involved in the temporal progression of vulval fate patterning, possibly by inhibiting lin-12. Acts as a transcription factor involved in the stage-specific repression of various genes, including insulin/insulin-like growth factor gene ins-33 and neuropeptide-encoding gene nlp-45. Binds to the consensus sequence 5'-[CT]GGA[AG]-3' in the regulatory elements of target genes. Plays a role in governing the developmental timing of male tail tip morphogenesis. Plays a role in controlling the timing of seam cell development during the larval stages. Plays a role in promoting survival at high temperatures in larvae. Involved in maintenance of the architecture of the ventral nerve cord, perhaps acting via modulating expression of the immunoglobulin domain gene zig-4. Functionally, may specify L2 and later cell fates, creating a temporal switch. May be involved in specifying L1 cell fates. The polypeptide is Protein lin-14 (Caenorhabditis elegans).